We begin with the raw amino-acid sequence, 472 residues long: 3-isopropylmalate dehydratase large subunit (472 aa).

[4Fe-4S] cluster contacts are provided by Cys350, Cys411, and Cys414.

The protein belongs to the aconitase/IPM isomerase family. LeuC type 1 subfamily. In terms of assembly, heterodimer of LeuC and LeuD. Requires [4Fe-4S] cluster as cofactor.

It catalyses the reaction (2R,3S)-3-isopropylmalate = (2S)-2-isopropylmalate. It functions in the pathway amino-acid biosynthesis; L-leucine biosynthesis; L-leucine from 3-methyl-2-oxobutanoate: step 2/4. Catalyzes the isomerization between 2-isopropylmalate and 3-isopropylmalate, via the formation of 2-isopropylmaleate. This is 3-isopropylmalate dehydratase large subunit from Alcanivorax borkumensis (strain ATCC 700651 / DSM 11573 / NCIMB 13689 / SK2).